The following is a 545-amino-acid chain: ATP synthase subunit alpha (545 aa).

ATP is bound at residue 173 to 180 (GDRQTGKS).

Belongs to the ATPase alpha/beta chains family. In terms of assembly, F-type ATPases have 2 components, CF(1) - the catalytic core - and CF(0) - the membrane proton channel. CF(1) has five subunits: alpha(3), beta(3), gamma(1), delta(1), epsilon(1). CF(0) has three main subunits: a(1), b(2) and c(9-12). The alpha and beta chains form an alternating ring which encloses part of the gamma chain. CF(1) is attached to CF(0) by a central stalk formed by the gamma and epsilon chains, while a peripheral stalk is formed by the delta and b chains.

Its subcellular location is the cell membrane. It carries out the reaction ATP + H2O + 4 H(+)(in) = ADP + phosphate + 5 H(+)(out). Functionally, produces ATP from ADP in the presence of a proton gradient across the membrane. The alpha chain is a regulatory subunit. This chain is ATP synthase subunit alpha, found in Arthrobacter sp. (strain FB24).